The primary structure comprises 728 residues: 1,4-alpha-glucan branching enzyme GlgB (728 aa).

The Nucleophile role is filled by D405. E458 functions as the Proton donor in the catalytic mechanism.

It belongs to the glycosyl hydrolase 13 family. GlgB subfamily. As to quaternary structure, monomer.

It catalyses the reaction Transfers a segment of a (1-&gt;4)-alpha-D-glucan chain to a primary hydroxy group in a similar glucan chain.. It functions in the pathway glycan biosynthesis; glycogen biosynthesis. In terms of biological role, catalyzes the formation of the alpha-1,6-glucosidic linkages in glycogen by scission of a 1,4-alpha-linked oligosaccharide from growing alpha-1,4-glucan chains and the subsequent attachment of the oligosaccharide to the alpha-1,6 position. The protein is 1,4-alpha-glucan branching enzyme GlgB of Escherichia coli O6:K15:H31 (strain 536 / UPEC).